The following is a 1885-amino-acid chain: Chitin synthase 5 (1885 aa).

The region spanning 1 to 789 (MATRGNVPAH…SIALTGSQAA (789 aa)) is the Myosin motor domain. 99 to 106 (GESGSGKT) contacts ATP. N-linked (GlcNAc...) asparagine glycosylation is found at Asn219 and Asn429. The interval 601 to 649 (KPLRMPSVSRKKHDQLRRMASRRADRSPAPQEEEPLPGTEEAKVRRTKP) is disordered. The segment covering 609 to 621 (SRKKHDQLRRMAS) has biased composition (basic residues). Residues 666–690 (LDNITKSLTAPNVNNYFVFCLKPND) form an actin-binding region. The N-linked (GlcNAc...) asparagine glycan is linked to Asn668. Residues 794 to 817 (GDIGSPSRPDTPGHNPFSDSKARL) are disordered. 2 helical membrane passes run 894-914 (WLAI…KWIG) and 929-949 (FAIN…IIVF). Positions 957–1016 (QNVYSAAELSAHDGKGKHSAYVAIRGQVFDLGAFMPNHYPKIIPQSSLKKYAGVDATGLF) constitute a Cytochrome b5 heme-binding domain. Residues Asn1043 and Asn1068 are each glycosylated (N-linked (GlcNAc...) asparagine). A helical membrane pass occupies residues 1205–1225 (ILLAVSILLCSVIGFKFFAAL). Residues Asn1462 and Asn1568 are each glycosylated (N-linked (GlcNAc...) asparagine). Transmembrane regions (helical) follow at residues 1599 to 1619 (LLST…IVLL), 1626 to 1646 (VPLT…IIFI), and 1653 to 1673 (MIGW…GLPL). 2 N-linked (GlcNAc...) asparagine glycosylation sites follow: Asn1759 and Asn1790. Residues 1827–1882 (LPTDDMLLNEIRDILRTADLMTVTKKGIKQELERRFNVNLDMKRAYIGSATEAILS) form the DEK-C domain.

It in the N-terminal section; belongs to the TRAFAC class myosin-kinesin ATPase superfamily. Myosin family. In the C-terminal section; belongs to the chitin synthase family. Class V subfamily. In terms of processing, maximal activity requires trypsin activation, suggesting a zymogenic nature.

The protein localises to the cell membrane. It is found in the membrane. It catalyses the reaction [(1-&gt;4)-N-acetyl-beta-D-glucosaminyl](n) + UDP-N-acetyl-alpha-D-glucosamine = [(1-&gt;4)-N-acetyl-beta-D-glucosaminyl](n+1) + UDP + H(+). Polymerizes chitin, a structural polymer of the cell wall and septum, by transferring the sugar moiety of UDP-GlcNAc to the non-reducing end of the growing chitin polymer. CHS5 is required for the sustained growth at 37 degrees Celsius and is of critical importance for virulence. Especially important at infection temperatures for maintaining the cell wall integrity of developing yeast buds, elongating tips of hyphae, and random sites of expansion in sclerotic forms. The chain is Chitin synthase 5 from Exophiala dermatitidis (strain ATCC 34100 / CBS 525.76 / NIH/UT8656) (Black yeast).